The primary structure comprises 338 residues: Activator of 90 kDa heat shock protein ATPase homolog 1 (338 aa).

At Lys-3 the chain carries N6-acetyllysine. A Glycyl lysine isopeptide (Lys-Gly) (interchain with G-Cter in SUMO1) cross-link involves residue Lys-182. Ser-193 is modified (phosphoserine). A Glycyl lysine isopeptide (Lys-Gly) (interchain with G-Cter in SUMO2) cross-link involves residue Lys-203. Lys-212 carries the N6-acetyllysine modification. A Phosphotyrosine; by ABL modification is found at Tyr-223.

The protein belongs to the AHA1 family. In terms of assembly, interacts with HSPCA/HSP90. Interacts with HSP90AA1; the interaction activates HSP90AA1 ATPase activity. Interacts with HSP90AB1. Interacts with GCH1. Interacts with SRPK1. Interacts with FLCN. Phosphorylation at Tyr-223 enhances binding to chaperone HSP90AA1.

It localises to the cytoplasm. Its subcellular location is the cytosol. It is found in the endoplasmic reticulum. Its function is as follows. Acts as a co-chaperone of HSP90AA1. Activates the ATPase activity of HSP90AA1 leading to increase in its chaperone activity. Competes with the inhibitory co-chaperone FNIP1 for binding to HSP90AA1, thereby providing a reciprocal regulatory mechanism for chaperoning of client proteins. Competes with the inhibitory co-chaperone TSC1 for binding to HSP90AA1, thereby providing a reciprocal regulatory mechanism for chaperoning of client proteins. The polypeptide is Activator of 90 kDa heat shock protein ATPase homolog 1 (Ahsa1) (Mus musculus (Mouse)).